A 610-amino-acid polypeptide reads, in one-letter code: Glutamine--fructose-6-phosphate aminotransferase [isomerizing] (610 aa).

The active-site Nucleophile; for GATase activity is the C2. A Glutamine amidotransferase type-2 domain is found at 2–217; sequence CGIVGYVGQK…DKEFVVLTND (216 aa). SIS domains follow at residues 284–424 and 453–600; these read ITKE…LKGS and LIKE…VDKP. K605 acts as the For Fru-6P isomerization activity in catalysis.

As to quaternary structure, homodimer.

It localises to the cytoplasm. The catalysed reaction is D-fructose 6-phosphate + L-glutamine = D-glucosamine 6-phosphate + L-glutamate. In terms of biological role, catalyzes the first step in hexosamine metabolism, converting fructose-6P into glucosamine-6P using glutamine as a nitrogen source. This chain is Glutamine--fructose-6-phosphate aminotransferase [isomerizing], found in Clostridium perfringens (strain 13 / Type A).